The following is a 203-amino-acid chain: MAQQEMVTINAELRDVKKKKAMQALREKGSIPAVIYGKGHDNVNLTLSAKEFTKQYKSGALSAHLIELDISGKKEYALVRDIQWHVVKDTVQHVDFQFVDKGSEIKIDIPLSFINESKSPGIKLGGVLNVLCRSITVKCSPEKIPQVIEIDLSGKMIGQSIHINDVKLPEGVKFVAHEEENFTIVTISAADSDVEETQTKTEE.

The protein belongs to the bacterial ribosomal protein bL25 family. CTC subfamily. In terms of assembly, part of the 50S ribosomal subunit; part of the 5S rRNA/L5/L18/L25 subcomplex. Contacts the 5S rRNA. Binds to the 5S rRNA independently of L5 and L18.

In terms of biological role, this is one of the proteins that binds to the 5S RNA in the ribosome where it forms part of the central protuberance. This Wolbachia pipientis subsp. Culex pipiens (strain wPip) protein is Large ribosomal subunit protein bL25.